The following is a 427-amino-acid chain: uncharacterized protein (427 aa).

A coiled-coil region spans residues 135–168 (PILKQKLVSLESKVKKIDKEMEKHNDLLKEIQEN).

This is an uncharacterized protein from Arabidopsis thaliana (Mouse-ear cress).